Reading from the N-terminus, the 191-residue chain is LHFPL tetraspan subfamily member 7 protein (191 aa).

A run of 4 helical transmembrane segments spans residues 6 to 26, 72 to 92, 112 to 132, and 154 to 174; these read MGSLWVILSLILTLISGFSLM, IAAVLLFGGWLLLSFGAVLVL, YAQISAVVVTVLGLLVFPFNL, and LGWGYMMAIVTVMLSCFLPFI.

The protein belongs to the TMEM211 family.

The protein resides in the membrane. This chain is LHFPL tetraspan subfamily member 7 protein (lhfpl7), found in Xenopus tropicalis (Western clawed frog).